Consider the following 855-residue polypeptide: Pre-mRNA-splicing factor SYF1 (855 aa).

HAT repeat units lie at residues 15-47 (LVFEEEDLPYEEEIMRNQFSVKCWLRYIEFKQG), 48-80 (APKPRLNQLYERALKLLPCSYKLWYRYLKARRA), 90-122 (PAYEDVNNCHERAFVFMHKMPRLWLDYCQFLMD), 124-158 (GRVTHTRRTFDRALRALPITQHSRIWPLYLRFLRS), 160-192 (PLPETAVRGYRRFLKLSPESAEEYIEYLKSSDR), 198-230 (QRLATVVNDERFVSKAGKSNYQLWHELCDLISQ), 235-268 (VQSLNVDAIIRGGLTRFTDQLGKLWCSLADYYIR), 270-305 (GHFEKARDVYEEAIRTVMTVRDFTQVFDSYAQFEES), and 369-407 (GRPREIINTYTEAVQTVDPFKATGKPHTLWVAFAKFYED). Lys420 is subject to N6-acetyllysine. HAT repeat units follow at residues 498–530 (GTFQSTKAVYDRILDLRIATPQIVINYAMFLEE), 532–566 (KYFEESFKAYERGISLFKWPNVSDIWSTYLTKFIS), 571–605 (RKLERARDLFEQALDGCPPKYAKTLYLLYAQLEEE), 643–677 (YGVTHTRGIYQKAIEVLSDEHAREMCLRFADMECK), and 679–713 (GEIDRARAIYSFCSQICDPRTTGAFWQTWKDFEVR). The interval 808-855 (AELAQQANPEEIQLGEDEDEDEMDLEPNEVRLEQQSVPAAVFGSLKED) is disordered. Over residues 820-834 (QLGEDEDEDEMDLEP) the composition is skewed to acidic residues. Ser851 bears the Phosphoserine mark.

This sequence belongs to the crooked-neck family. As to quaternary structure, associates with RNA polymerase II, the TCR-specific proteins CKN1/CSA and ERCC6/CSB, and XPA. Identified in the spliceosome C complex. Component of the XAB2 complex, a multimeric protein complex composed of XAB2, PRPF19, AQR, ZNF830, ISY1, and PPIE. Identified in a pentameric intron-binding (IB) complex composed of AQR, XAB2, ISY1, ZNF830 and PPIE that is incorporated into the spliceosome as a preassembled complex. The IB complex does not contain PRPF19.

Its subcellular location is the nucleus. Functionally, involved in pre-mRNA splicing as component of the spliceosome. Involved in transcription-coupled repair (TCR), transcription and pre-mRNA splicing. The sequence is that of Pre-mRNA-splicing factor SYF1 (Xab2) from Rattus norvegicus (Rat).